We begin with the raw amino-acid sequence, 400 residues long: MNGQLDLSGKLIIKAQLGEDIRRIPIHNEDITYDELVLMMQRVFRGKLLSNDEVTIKYKDEDGDLITIFDSSDLSFAIQCSRILKLTLFVNGQPRPLESSQVKYLRRELIELRNKVNRLLDSLEPPGEPGPSTNIPENDTVDGREEKSASDSSGKQSTQVMAASMSAFDPLKNQDEINKNVMSAFGLTDDQVSGPPSAPAEDRSGTPDSIASSSSAAHPPGVQPQQPPYTGAQTQAGQIEGQMYQQYQQQAGYGAQQPQAPPQQPQQYGIQYSASYSQQTGPQQPQQFQGYGQQPTSQAPAPAFSGQPQQLPAQPPQQYQASNYPAQTYTAQTSQPTNYTVAPASQPGMAPSQPGAYQPRPGFTSLPGSTMTPPPSGPNPYARNRPPFGQGYTQPGPGYR.

Methionine 1 carries the N-acetylmethionine modification. The region spanning 10–91 (KLIIKAQLGE…RILKLTLFVN (82 aa)) is the PB1 domain. Position 50 is a phosphoserine (serine 50). A coiled-coil region spans residues 97-124 (LESSQVKYLRRELIELRNKVNRLLDSLE). 2 disordered regions span residues 120-160 (LDSL…STQV) and 187-400 (LTDD…PGYR). The segment covering 150-160 (SDSSGKQSTQV) has biased composition (polar residues). A Phosphoserine modification is found at serine 197. 3 stretches are compositionally biased toward low complexity: residues 237–258 (GQIE…AQQP), 265–298 (PQQY…PTSQ), and 307–327 (QPQQ…YPAQ). Polar residues predominate over residues 328 to 340 (TYTAQTSQPTNYT). Arginine 385 and arginine 400 each carry omega-N-methylarginine.

As to quaternary structure, self-associates to form an oligomeric complex. Interacts with PDCD6; promoting localization and polymerization of TFG at endoplasmic reticulum exit site. Interacts with SEC16B. Ubiquitous.

It localises to the endoplasmic reticulum. Plays a role in the normal dynamic function of the endoplasmic reticulum (ER) and its associated microtubules. Required for secretory cargo traffic from the endoplasmic reticulum to the Golgi apparatus. This chain is Protein TFG (TFG), found in Homo sapiens (Human).